An 85-amino-acid polypeptide reads, in one-letter code: Putative membrane protein insertion efficiency factor (85 aa).

This sequence belongs to the UPF0161 family.

The protein localises to the cell inner membrane. In terms of biological role, could be involved in insertion of integral membrane proteins into the membrane. The chain is Putative membrane protein insertion efficiency factor from Escherichia coli O6:H1 (strain CFT073 / ATCC 700928 / UPEC).